We begin with the raw amino-acid sequence, 1092 residues long: Probable arabinosyltransferase A (1092 aa).

13 helical membrane-spanning segments follow: residues 21–43 (IARL…VPLL), 214–233 (AVMV…LALL), 249–271 (GLWT…IVGA), 324–346 (VWMR…RCVL), 353–372 (VAAN…AAWL), 382–399 (PLIA…ENSI), 404–426 (LWPA…QGLI), 517–534 (FAVL…MVLL), 541–563 (GAVS…LLIL), 568–590 (WAIQ…AFAF), 602–624 (ALYV…GWFY), 639–661 (IAHY…LAGW), and 682–704 (ALAS…GSMV). The tract at residues 772–798 (PSGVSEHLEPEPVGTNPGTPNSEGPVD) is disordered.

Belongs to the emb family.

It localises to the cell membrane. Arabinosyl transferase responsible for the polymerization of arabinose into the arabinan of arabinogalactan. This Mycolicibacterium smegmatis (Mycobacterium smegmatis) protein is Probable arabinosyltransferase A (embA).